The following is an 88-amino-acid chain: Small ribosomal subunit protein bS20 (88 aa).

Residues 1–10 (MANHKSSLKR) show a composition bias toward basic residues. Residues 1–24 (MANHKSSLKRAKQDIVRNTRNKSR) are disordered.

This sequence belongs to the bacterial ribosomal protein bS20 family.

In terms of biological role, binds directly to 16S ribosomal RNA. The protein is Small ribosomal subunit protein bS20 of Desulfosudis oleivorans (strain DSM 6200 / JCM 39069 / Hxd3) (Desulfococcus oleovorans).